Reading from the N-terminus, the 1376-residue chain is Protein FAM135B (1376 aa).

Residues 431-442 (NEDECEFSEESP) show a composition bias toward acidic residues. The tract at residues 431-489 (NEDECEFSEESPSENTHVGSKPHSIQSTTVHENASFEKPNVGTKAQEDCSTEGPEQGFD) is disordered. Residues 443 to 462 (SENTHVGSKPHSIQSTTVHE) show a composition bias toward polar residues.

This sequence belongs to the FAM135 family.

This Xenopus laevis (African clawed frog) protein is Protein FAM135B (fam135b).